Reading from the N-terminus, the 765-residue chain is Probable serine/threonine-protein kinase DDB_G0271402 (765 aa).

Residues 35-328 (LEFGQEIGKG…KEITERLKSL (294 aa)) enclose the Protein kinase domain. Residues 41-49 (IGKGAYGKI) and K62 each bind ATP. The active-site Proton acceptor is D192. 7 disordered regions span residues 371-393 (IVHN…NNSN), 443-477 (SMGD…KIIN), 491-527 (SSDL…NNNS), 545-620 (PIQI…QQYQ), 654-684 (PLNI…HHHL), 699-738 (IISS…PTNI), and 746-765 (ASNS…TVQS). A compositionally biased stretch (acidic residues) spans 446–458 (DESDLDSDDEDDS). Low complexity-rich tracts occupy residues 459–470 (YTSSASSSRCNS), 499–527 (NGNN…NNNS), 562–605 (PPTS…PKSN), 662–678 (NNNN…GNVN), and 699–720 (IISS…SLTS).

This sequence belongs to the protein kinase superfamily. TKL Ser/Thr protein kinase family.

The enzyme catalyses L-seryl-[protein] + ATP = O-phospho-L-seryl-[protein] + ADP + H(+). The catalysed reaction is L-threonyl-[protein] + ATP = O-phospho-L-threonyl-[protein] + ADP + H(+). The polypeptide is Probable serine/threonine-protein kinase DDB_G0271402 (Dictyostelium discoideum (Social amoeba)).